A 226-amino-acid polypeptide reads, in one-letter code: 2-amino-5-formylamino-6-ribosylaminopyrimidin-4(3H)-one 5'-monophosphate deformylase (226 aa).

Fe cation is bound by residues E29, H31, D40, and H108.

It belongs to the creatininase superfamily. FAPy deformylase family. In terms of assembly, homodimer. The cofactor is Fe(2+). It depends on Zn(2+) as a cofactor.

The enzyme catalyses 2-amino-5-formylamino-6-(5-phospho-D-ribosylamino)pyrimidin-4(3H)-one + H2O = 2,5-diamino-6-(1-D-ribosylamino)pyrimidin-4(3H)-one 5'-phosphate + formate + H(+). The protein operates within cofactor biosynthesis; coenzyme F420 biosynthesis. It functions in the pathway cofactor biosynthesis; riboflavin biosynthesis. Its function is as follows. Catalyzes the hydrolysis of the formamide of 2-amino-5-formylamino-6-ribosylamino-4(3H)-pyrimidinone 5'-monophosphate (FAPy) to form 2,5-diamino-6-ribosylamino-4(3H)-pyrimidinone 5'-phosphate (APy). This Methanocaldococcus vulcanius (strain ATCC 700851 / DSM 12094 / M7) (Methanococcus vulcanius) protein is 2-amino-5-formylamino-6-ribosylaminopyrimidin-4(3H)-one 5'-monophosphate deformylase.